A 335-amino-acid chain; its full sequence is DNA polymerase beta (335 aa).

Lys41 participates in a covalent cross-link: Glycyl lysine isopeptide (Lys-Gly) (interchain with G-Cter in ubiquitin). Residue Lys60 coordinates K(+). Lys60 serves as a coordination point for Na(+). Residue Lys61 forms a Glycyl lysine isopeptide (Lys-Gly) (interchain with G-Cter in ubiquitin) linkage. 2 residues coordinate K(+): Leu62 and Val65. The Na(+) site is built by Leu62 and Val65. Lys72 serves as the catalytic Nucleophile; Schiff-base intermediate with DNA; for 5'-dRP lyase activity. Lys72 carries the N6-acetyllysine modification. Residue Lys81 forms a Glycyl lysine isopeptide (Lys-Gly) (interchain with G-Cter in ubiquitin) linkage. Arg83 carries the post-translational modification Omega-N-methylarginine; by PRMT6. K(+)-binding residues include Thr101, Val103, and Ile106. The Na(+) site is built by Thr101, Val103, and Ile106. Arg149 provides a ligand contact to a 2'-deoxyribonucleoside 5'-triphosphate. Arg152 is modified (omega-N-methylarginine; by PRMT6). A 2'-deoxyribonucleoside 5'-triphosphate-binding residues include Ser180, Arg183, Gly189, and Asp190. The interval 183–192 (RGAESSGDMD) is DNA-binding. Mg(2+) is bound by residues Asp190, Asp192, and Asp256.

This sequence belongs to the DNA polymerase type-X family. Monomer. Binds single-stranded DNA (ssDNA). Interacts with APEX1, LIG1, LIG3, FEN1, PCNA and XRCC1. Interacts with HUWE1/ARF-BP1, STUB1/CHIP and USP47. Interacts with FAM168A. Mg(2+) serves as cofactor. In terms of processing, methylation by PRMT6 stimulates the polymerase activity by enhancing DNA binding and processivity. Post-translationally, ubiquitinated at Lys-41, Lys-61 and Lys-81: monoubiquitinated by HUWE1/ARF-BP1. Monoubiquitinated protein is then the target of STUB1/CHIP, which catalyzes polyubiquitination from monoubiquitin, leading to degradation by the proteasome. USP47 mediates the deubiquitination of monoubiquitinated protein, preventing polyubiquitination by STUB1/CHIP and its subsequent degradation.

Its subcellular location is the nucleus. It is found in the cytoplasm. The enzyme catalyses DNA(n) + a 2'-deoxyribonucleoside 5'-triphosphate = DNA(n+1) + diphosphate. It catalyses the reaction a 5'-end 2'-deoxyribose-2'-deoxyribonucleotide-DNA = (2E,4S)-4-hydroxypenten-2-al-5-phosphate + a 5'-end 5'-phospho-2'-deoxyribonucleoside-DNA + H(+). The catalysed reaction is 2'-deoxyribonucleotide-(2'-deoxyribose 5'-phosphate)-2'-deoxyribonucleotide-DNA = a 3'-end 2'-deoxyribonucleotide-(2,3-dehydro-2,3-deoxyribose 5'-phosphate)-DNA + a 5'-end 5'-phospho-2'-deoxyribonucleoside-DNA + H(+). Repair polymerase that plays a key role in base-excision repair. During this process, the damaged base is excised by specific DNA glycosylases, the DNA backbone is nicked at the abasic site by an apurinic/apyrimidic (AP) endonuclease, and POLB removes 5'-deoxyribose-phosphate from the preincised AP site acting as a 5'-deoxyribose-phosphate lyase (5'-dRP lyase); through its DNA polymerase activity, it adds one nucleotide to the 3' end of the arising single-nucleotide gap. Conducts 'gap-filling' DNA synthesis in a stepwise distributive fashion rather than in a processive fashion as for other DNA polymerases. It is also able to cleave sugar-phosphate bonds 3' to an intact AP site, acting as an AP lyase. The polypeptide is DNA polymerase beta (Polb) (Mus musculus (Mouse)).